The following is a 289-amino-acid chain: 5'-adenylylsulfate reductase-like 7 (289 aa).

Residues 1–23 (MNLWVSIFLVSAIAGSCLPSGFA) form the signal peptide. In terms of domain architecture, Thioredoxin spans 37-157 (SVIEQKCPRS…LIQFYKETTG (121 aa)). Residues asparagine 132 and asparagine 184 are each glycosylated (N-linked (GlcNAc...) asparagine). The chain crosses the membrane as a helical span at residues 198–218 (MVLALMFLSLKLAILIFPIMG).

It is found in the membrane. The sequence is that of 5'-adenylylsulfate reductase-like 7 (APRL7) from Arabidopsis thaliana (Mouse-ear cress).